We begin with the raw amino-acid sequence, 235 residues long: Endonuclease V (235 aa).

Mg(2+)-binding residues include D47 and D115.

Belongs to the endonuclease V family. The cofactor is Mg(2+).

The protein resides in the cytoplasm. The catalysed reaction is Endonucleolytic cleavage at apurinic or apyrimidinic sites to products with a 5'-phosphate.. Its function is as follows. DNA repair enzyme involved in the repair of deaminated bases. Selectively cleaves double-stranded DNA at the second phosphodiester bond 3' to a deoxyinosine leaving behind the intact lesion on the nicked DNA. This is Endonuclease V from Myxococcus xanthus (strain DK1622).